We begin with the raw amino-acid sequence, 40 residues long: Dermonecrotic toxin LgSicTox-alphaI-1 (40 aa).

Mg(2+) contacts are provided by glutamate 32 and aspartate 34.

The protein belongs to the arthropod phospholipase D family. Class II subfamily. It depends on Mg(2+) as a cofactor. Post-translationally, contains 2 disulfide bonds. In terms of tissue distribution, expressed by the venom gland.

The protein localises to the secreted. It carries out the reaction an N-(acyl)-sphingosylphosphocholine = an N-(acyl)-sphingosyl-1,3-cyclic phosphate + choline. It catalyses the reaction an N-(acyl)-sphingosylphosphoethanolamine = an N-(acyl)-sphingosyl-1,3-cyclic phosphate + ethanolamine. The catalysed reaction is a 1-acyl-sn-glycero-3-phosphocholine = a 1-acyl-sn-glycero-2,3-cyclic phosphate + choline. The enzyme catalyses a 1-acyl-sn-glycero-3-phosphoethanolamine = a 1-acyl-sn-glycero-2,3-cyclic phosphate + ethanolamine. In terms of biological role, dermonecrotic toxins cleave the phosphodiester linkage between the phosphate and headgroup of certain phospholipids (sphingolipid and lysolipid substrates), forming an alcohol (often choline) and a cyclic phosphate. This toxin acts on sphingomyelin (SM). It may also act on ceramide phosphoethanolamine (CPE), lysophosphatidylcholine (LPC) and lysophosphatidylethanolamine (LPE), but not on lysophosphatidylserine (LPS), and lysophosphatidylglycerol (LPG). It acts by transphosphatidylation, releasing exclusively cyclic phosphate products as second products. In vivo, intradermal injection induces dermonecrosis. Induces, hemolysis, vascular permeability, edema, inflammatory response, and platelet aggregation. In Loxosceles gaucho (Spider), this protein is Dermonecrotic toxin LgSicTox-alphaI-1.